Here is a 152-residue protein sequence, read N- to C-terminus: Transcriptional repressor NrdR (152 aa).

The segment at 3 to 34 (CPFCSTEETKVIDSRLVSEGYQVRRRRECTNC) is a zinc-finger region. The ATP-cone domain occupies 49-139 (PKIVKTDGYR…VYLSFENINE (91 aa)).

This sequence belongs to the NrdR family. Zn(2+) is required as a cofactor.

In terms of biological role, negatively regulates transcription of bacterial ribonucleotide reductase nrd genes and operons by binding to NrdR-boxes. This chain is Transcriptional repressor NrdR, found in Actinobacillus succinogenes (strain ATCC 55618 / DSM 22257 / CCUG 43843 / 130Z).